A 297-amino-acid polypeptide reads, in one-letter code: MIKIEVPATTTNFGSGFDTFGLALSLTNTFSVDFSDKYEVQIEGYSSGIPKDQKNLFIKVYKKTCQSIGKKPKPLKLIQENRVPPARGLGSSATAIVGGIEAALALHKVELPLKEKLKIAFEFEKHPDNIIPAFVGGFTVCATSESGVIFKKLPFPEDIKIVFVIPDFEVSTSEARRVLPKKVELKEAVFNVQRSALFVSALLTKDYKLLREAVRDKLHQPYREKLVPGLSEAILVSYKEGALATFLSGAGPTICSLTTENEEKIGEAIREVITKFSGYDAQVMVLKARNEGVKVYS.

ATP is bound at residue 84–94 (PPARGLGSSAT).

It belongs to the GHMP kinase family. Homoserine kinase subfamily.

Its subcellular location is the cytoplasm. The enzyme catalyses L-homoserine + ATP = O-phospho-L-homoserine + ADP + H(+). It functions in the pathway amino-acid biosynthesis; L-threonine biosynthesis; L-threonine from L-aspartate: step 4/5. Catalyzes the ATP-dependent phosphorylation of L-homoserine to L-homoserine phosphate. The protein is Homoserine kinase (thrB) of Aquifex aeolicus (strain VF5).